The following is a 416-amino-acid chain: Glutamyl-tRNA reductase (416 aa).

Substrate contacts are provided by residues 49-52, serine 105, 110-112, and glutamine 116; these read TCNR and EPQ. Cysteine 50 (nucleophile) is an active-site residue. 185–190 is a binding site for NADP(+); that stretch reads GAGETI.

It belongs to the glutamyl-tRNA reductase family. Homodimer.

The catalysed reaction is (S)-4-amino-5-oxopentanoate + tRNA(Glu) + NADP(+) = L-glutamyl-tRNA(Glu) + NADPH + H(+). Its pathway is porphyrin-containing compound metabolism; protoporphyrin-IX biosynthesis; 5-aminolevulinate from L-glutamyl-tRNA(Glu): step 1/2. Catalyzes the NADPH-dependent reduction of glutamyl-tRNA(Glu) to glutamate 1-semialdehyde (GSA). This is Glutamyl-tRNA reductase from Shewanella loihica (strain ATCC BAA-1088 / PV-4).